The following is a 432-amino-acid chain: MLDAKYLRNDINIAAQKLEKRGYTLDVAQFTALEEKRKSLQMRTQELQNERNVRSKSIGKAKASGQDIEPLLAQVGQLGDELNAAKAELTGLLDEIQTLTLNIPNLPDDSVPEGKDEDENVEVSRWGTPREFDFEVKDHVDLGAGVANGLDFETATKLTGSRFVVMRGQIARLNRAIAQFMLDLHTEQHGYQEMYVPYLVNEESMLGTGQFPKFVGDAFHTKPATEEGQGLSLIPTSEVPLTNIARDCIFAANELPIKMTAHTPCFRSEAGSYGRDTRGLIRQHQFDKVEMVQLVEADKSFEALDELTGNAEKVLQLLELPYRKMLLCTGDMGFGACKTFDLEVWLPAQDTYREISSCSNMLDFQARRMQARYRDPQTNKTELLHTLNGSGLAVGRTLVAILENYQQADGSITIPEVLQPYMNGVTVIGAVK.

236-238 serves as a coordination point for L-serine; that stretch reads TSE. 267-269 provides a ligand contact to ATP; sequence RSE. Residue Glu-290 coordinates L-serine. An ATP-binding site is contributed by 354–357; the sequence is EISS. Residue Ser-390 coordinates L-serine.

This sequence belongs to the class-II aminoacyl-tRNA synthetase family. Type-1 seryl-tRNA synthetase subfamily. Homodimer. The tRNA molecule binds across the dimer.

The protein resides in the cytoplasm. The catalysed reaction is tRNA(Ser) + L-serine + ATP = L-seryl-tRNA(Ser) + AMP + diphosphate + H(+). It catalyses the reaction tRNA(Sec) + L-serine + ATP = L-seryl-tRNA(Sec) + AMP + diphosphate + H(+). It functions in the pathway aminoacyl-tRNA biosynthesis; selenocysteinyl-tRNA(Sec) biosynthesis; L-seryl-tRNA(Sec) from L-serine and tRNA(Sec): step 1/1. Catalyzes the attachment of serine to tRNA(Ser). Is also able to aminoacylate tRNA(Sec) with serine, to form the misacylated tRNA L-seryl-tRNA(Sec), which will be further converted into selenocysteinyl-tRNA(Sec). In Pseudoalteromonas atlantica (strain T6c / ATCC BAA-1087), this protein is Serine--tRNA ligase.